Here is a 105-residue protein sequence, read N- to C-terminus: MSLGPWEIGIIVLLIIVLFGAKKLPDAARSIGRSMRIFKSEVKEMNKDGDTPEQQQQPQQQIAPNQIEAPQPNFEQHYQGQQVQQPQNPQTPDYRQNYEDPNRTS.

Residues 1–21 traverse the membrane as a helical segment; that stretch reads MSLGPWEIGIIVLLIIVLFGA. Basic and acidic residues predominate over residues 41–50; that stretch reads EVKEMNKDGD. Residues 41 to 105 form a disordered region; the sequence is EVKEMNKDGD…QNYEDPNRTS (65 aa). Residues 52–92 show a composition bias toward low complexity; it reads PEQQQQPQQQIAPNQIEAPQPNFEQHYQGQQVQQPQNPQTP. Residues 96-105 are compositionally biased toward basic and acidic residues; the sequence is QNYEDPNRTS.

It belongs to the TatA/E family. In terms of assembly, the Tat system comprises two distinct complexes: a TatABC complex, containing multiple copies of TatA, TatB and TatC subunits, and a separate TatA complex, containing only TatA subunits. Substrates initially bind to the TatABC complex, which probably triggers association of the separate TatA complex to form the active translocon.

The protein localises to the cell membrane. Its function is as follows. Part of the twin-arginine translocation (Tat) system that transports large folded proteins containing a characteristic twin-arginine motif in their signal peptide across membranes. TatA could form the protein-conducting channel of the Tat system. This chain is Sec-independent protein translocase protein TatA, found in Corynebacterium glutamicum (strain ATCC 13032 / DSM 20300 / JCM 1318 / BCRC 11384 / CCUG 27702 / LMG 3730 / NBRC 12168 / NCIMB 10025 / NRRL B-2784 / 534).